The sequence spans 109 residues: Putative double-stranded DNA mimic protein YciU (109 aa).

This sequence belongs to the putative dsDNA mimic protein family.

In terms of biological role, may act as a double-stranded DNA (dsDNA) mimic. Probably regulates the activity of a dsDNA-binding protein. The sequence is that of Putative double-stranded DNA mimic protein YciU from Shigella flexneri.